Reading from the N-terminus, the 958-residue chain is Translation initiation factor IF-2 (958 aa).

Disordered stretches follow at residues 67–95 (APAA…APAP) and 111–355 (PAPA…VPRG). Over residues 75–95 (APAPGPAAPKAPAPAPAAPAP) the composition is skewed to pro residues. Low complexity predominate over residues 140–161 (PAPARQGGQAPRPGGPRPGNNP). Residues 195 to 206 (RGERRNDGERPG) are compositionally biased toward basic and acidic residues. The span at 209–221 (RPAAGAGGPRPAA) shows a compositional bias: low complexity. Residues 228-241 (PGAPRPGAPRPGAP) are compositionally biased toward pro residues. The span at 268-325 (GGAGRPGGAGRPGGGPGRPGGAPGAGTGGGAPAGGGFGKGGRGRGGTQGAFGKGGAGR) shows a compositional bias: gly residues. Over residues 326 to 335 (GKQRKSKRAK) the composition is skewed to basic residues. In terms of domain architecture, tr-type G spans 450–621 (ARAPVVTVMG…AVLLTADAAL (172 aa)). A G1 region spans residues 459 to 466 (GHVDHGKT). Residue 459–466 (GHVDHGKT) participates in GTP binding. Residues 484-488 (GITQH) are G2. The segment at 509-512 (DTPG) is G3. Residues 509 to 513 (DTPGH) and 563 to 566 (NKID) each bind GTP. The segment at 563–566 (NKID) is G4. The tract at residues 599–601 (SAR) is G5.

Belongs to the TRAFAC class translation factor GTPase superfamily. Classic translation factor GTPase family. IF-2 subfamily.

Its subcellular location is the cytoplasm. One of the essential components for the initiation of protein synthesis. Protects formylmethionyl-tRNA from spontaneous hydrolysis and promotes its binding to the 30S ribosomal subunits. Also involved in the hydrolysis of GTP during the formation of the 70S ribosomal complex. In Paenarthrobacter aurescens (strain TC1), this protein is Translation initiation factor IF-2.